A 184-amino-acid polypeptide reads, in one-letter code: GTP cyclohydrolase 1 (184 aa).

3 residues coordinate Zn(2+): Cys-75, His-78, and Cys-146.

Belongs to the GTP cyclohydrolase I family. As to quaternary structure, homomer.

It catalyses the reaction GTP + H2O = 7,8-dihydroneopterin 3'-triphosphate + formate + H(+). The protein operates within cofactor biosynthesis; 7,8-dihydroneopterin triphosphate biosynthesis; 7,8-dihydroneopterin triphosphate from GTP: step 1/1. This chain is GTP cyclohydrolase 1, found in Finegoldia magna (strain ATCC 29328 / DSM 20472 / WAL 2508) (Peptostreptococcus magnus).